A 216-amino-acid chain; its full sequence is Ras-related protein Rab-5C (216 aa).

GTP-binding residues include Ser30, Ala31, Gly33, Lys34, Ser35, Ser36, His47, Glu48, Thr53, and Gly79. Ser35 provides a ligand contact to Mg(2+). 2 consecutive short sequence motifs (switch) follow at residues 45–57 (QFHE…IGAA) and 78–94 (AGQE…YRGA). Thr53 provides a ligand contact to Mg(2+). Phosphoserine is present on Ser85. Residues Asn134, Lys135, Asp137, Ala165, and Lys166 each coordinate GTP. The segment at 185–216 (NEPQNAAGAPGRNRGVDLQENNPASRSQCCSN) is disordered. The span at 203–216 (QENNPASRSQCCSN) shows a compositional bias: polar residues. 2 S-geranylgeranyl cysteine lipidation sites follow: Cys213 and Cys214.

It belongs to the small GTPase superfamily. Rab family. In terms of assembly, interacts with EEA1 and INCA1. Interacts with GDI1, GDI2, CHML and CHM; phosphorylation at Ser-85 disrupts this interaction. Requires Mg(2+) as cofactor. Post-translationally, phosphorylation of Ser-85 in the switch II region by LRRK2 prevents the association of RAB regulatory proteins, including CHM, CHML and RAB GDP dissociation inhibitors GDI1 and GDI2.

It localises to the cell membrane. Its subcellular location is the early endosome membrane. The protein resides in the melanosome. It catalyses the reaction GTP + H2O = GDP + phosphate + H(+). Regulated by guanine nucleotide exchange factors (GEFs) which promote the exchange of bound GDP for free GTP. Regulated by GTPase activating proteins (GAPs) which increase the GTP hydrolysis activity. Inhibited by GDP dissociation inhibitors (GDIs). Functionally, the small GTPases Rab are key regulators of intracellular membrane trafficking, from the formation of transport vesicles to their fusion with membranes. Rabs cycle between an inactive GDP-bound form and an active GTP-bound form that is able to recruit to membranes different sets of downstream effectors directly responsible for vesicle formation, movement, tethering and fusion. The protein is Ras-related protein Rab-5C (RAB5C) of Bos taurus (Bovine).